The chain runs to 96 residues: Putative pterin-4-alpha-carbinolamine dehydratase (96 aa).

The protein belongs to the pterin-4-alpha-carbinolamine dehydratase family.

The catalysed reaction is (4aS,6R)-4a-hydroxy-L-erythro-5,6,7,8-tetrahydrobiopterin = (6R)-L-erythro-6,7-dihydrobiopterin + H2O. This chain is Putative pterin-4-alpha-carbinolamine dehydratase, found in Brucella anthropi (strain ATCC 49188 / DSM 6882 / CCUG 24695 / JCM 21032 / LMG 3331 / NBRC 15819 / NCTC 12168 / Alc 37) (Ochrobactrum anthropi).